A 274-amino-acid chain; its full sequence is ATP synthase subunit a (274 aa).

The next 5 membrane-spanning stretches (helical) occupy residues 43–63 (TLNIDSLFFSVVLGLAFLFVF), 103–123 (VIAPLALTVFVWVLLMNMMDL), 149–169 (DVSITLSMALGVFILILFYSI), 223–243 (LIFILIAGLLPWWSQWMLSLP), and 245–265 (AIFHILIITLQAFIFMVLTIV).

Belongs to the ATPase A chain family. As to quaternary structure, F-type ATPases have 2 components, CF(1) - the catalytic core - and CF(0) - the membrane proton channel. CF(1) has five subunits: alpha(3), beta(3), gamma(1), delta(1), epsilon(1). CF(0) has three main subunits: a(1), b(2) and c(9-12). The alpha and beta chains form an alternating ring which encloses part of the gamma chain. CF(1) is attached to CF(0) by a central stalk formed by the gamma and epsilon chains, while a peripheral stalk is formed by the delta and b chains.

Its subcellular location is the cell inner membrane. Its function is as follows. Key component of the proton channel; it plays a direct role in the translocation of protons across the membrane. This is ATP synthase subunit a from Yersinia enterocolitica serotype O:8 / biotype 1B (strain NCTC 13174 / 8081).